The following is a 456-amino-acid chain: tRNA modification GTPase MnmE (456 aa).

R23, E85, and R124 together coordinate (6S)-5-formyl-5,6,7,8-tetrahydrofolate. Positions 220-376 constitute a TrmE-type G domain; that stretch reads GVAVLIAGKP…LKESIFQTFI (157 aa). K(+) is bound at residue N230. GTP-binding positions include 230-235, 249-255, and 274-277; these read NVGKSS, TSVPGTT, and DTAG. S234 contacts Mg(2+). Residues T249, V251, and T254 each coordinate K(+). T255 lines the Mg(2+) pocket. Position 456 (K456) interacts with (6S)-5-formyl-5,6,7,8-tetrahydrofolate.

This sequence belongs to the TRAFAC class TrmE-Era-EngA-EngB-Septin-like GTPase superfamily. TrmE GTPase family. In terms of assembly, homodimer. Heterotetramer of two MnmE and two MnmG subunits. K(+) serves as cofactor.

The protein localises to the cytoplasm. Functionally, exhibits a very high intrinsic GTPase hydrolysis rate. Involved in the addition of a carboxymethylaminomethyl (cmnm) group at the wobble position (U34) of certain tRNAs, forming tRNA-cmnm(5)s(2)U34. In Geobacter sulfurreducens (strain ATCC 51573 / DSM 12127 / PCA), this protein is tRNA modification GTPase MnmE.